We begin with the raw amino-acid sequence, 508 residues long: Enhancer of mRNA-decapping protein 3 (508 aa).

Residues 1-68 (MAMDWLGSIV…ITELKILEIP (68 aa)) enclose the Sm domain. A required for P-body targeting and interaction with DCP1A region spans residues 1 to 79 (MAMDWLGSIV…PGDNQQVGDL (79 aa)). The tract at residues 98–194 (NGTGKVVKKP…KNKDDECFGD (97 aa)) is disordered. Phosphoserine occurs at positions 131, 138, 140, and 161. Residues 191–296 (CFGDDIEELP…HKKLLSVAEK (106 aa)) form a required for interaction with DDX6 region. Positions 192–228 (FGDDIEELPDTDFDFEGNLALFDKAAVFEEIDTYERR) constitute a DFDF domain. Residues 283–487 (SYELHKKLLS…DIGIPQQVFQ (205 aa)) enclose the YjeF N-terminal domain.

This sequence belongs to the EDC3 family. Homodimer (via YjeF N-terminal domain). Forms a complex with DCP1A, DCP2, DDX6 and EDC4/HEDLS, within this complex directly interacts with DCP1A and DDX6. Interacts with ZFP36.

The protein localises to the cytoplasm. It localises to the P-body. In terms of biological role, binds single-stranded RNA. Involved in the process of mRNA degradation and in the positive regulation of mRNA decapping. This chain is Enhancer of mRNA-decapping protein 3 (Edc3), found in Mus musculus (Mouse).